Consider the following 236-residue polypeptide: Phosphoribosylaminoimidazole-succinocarboxamide synthase (236 aa).

It belongs to the SAICAR synthetase family.

The enzyme catalyses 5-amino-1-(5-phospho-D-ribosyl)imidazole-4-carboxylate + L-aspartate + ATP = (2S)-2-[5-amino-1-(5-phospho-beta-D-ribosyl)imidazole-4-carboxamido]succinate + ADP + phosphate + 2 H(+). The protein operates within purine metabolism; IMP biosynthesis via de novo pathway; 5-amino-1-(5-phospho-D-ribosyl)imidazole-4-carboxamide from 5-amino-1-(5-phospho-D-ribosyl)imidazole-4-carboxylate: step 1/2. This chain is Phosphoribosylaminoimidazole-succinocarboxamide synthase, found in Pseudomonas savastanoi pv. phaseolicola (strain 1448A / Race 6) (Pseudomonas syringae pv. phaseolicola (strain 1448A / Race 6)).